A 199-amino-acid chain; its full sequence is Recombination protein RecR (199 aa).

Residues 57–72 (CRSCRTFTEESHCPIC) form a C4-type zinc finger. Positions 81 to 176 (EQICVVETPA…SVSRIAHGVP (96 aa)) constitute a Toprim domain.

The protein belongs to the RecR family.

In terms of biological role, may play a role in DNA repair. It seems to be involved in an RecBC-independent recombinational process of DNA repair. It may act with RecF and RecO. The polypeptide is Recombination protein RecR (Shewanella sediminis (strain HAW-EB3)).